A 352-amino-acid chain; its full sequence is S-adenosylmethionine:tRNA ribosyltransferase-isomerase (352 aa).

The protein belongs to the QueA family. As to quaternary structure, monomer.

It localises to the cytoplasm. The catalysed reaction is 7-aminomethyl-7-carbaguanosine(34) in tRNA + S-adenosyl-L-methionine = epoxyqueuosine(34) in tRNA + adenine + L-methionine + 2 H(+). It functions in the pathway tRNA modification; tRNA-queuosine biosynthesis. In terms of biological role, transfers and isomerizes the ribose moiety from AdoMet to the 7-aminomethyl group of 7-deazaguanine (preQ1-tRNA) to give epoxyqueuosine (oQ-tRNA). The sequence is that of S-adenosylmethionine:tRNA ribosyltransferase-isomerase from Paraburkholderia xenovorans (strain LB400).